The sequence spans 1434 residues: Probable deoxyribonuclease RhsA (1434 aa).

The interval 14–42 (AMHAGNRPNPPDDRPQPCRGKPPTSPGKT) is disordered. The next 2 membrane-spanning stretches (helical) occupy residues 48-68 (FLGA…VAAA) and 70-90 (VFLV…LAVF). YD repeat units lie at residues 486–521 (YDAA…CADG), 592–628 (DDTG…LGRE), and 847–876 (YDAR…LTEV).

It belongs to the RHS/WapA nuclease family.

It is found in the membrane. Functionally, toxic component of a toxin-immunity protein module, which functions as a cellular contact-dependent growth inhibition (CDI) system. This protein may be a nuclease that is specifically inhibited by its cognate immunity protein RhsAI. Upon expression of the C-terminus (residues 1284-1434) in E.coli growth is inhibited, cells elongate, nucleoids condense and plasmid DNA is degraded; these effects are blocked specifically by cognate immunity protein RshIA. Cell contact is necessary for growth inhibition. In Dickeya dadantii (strain 3937) (Erwinia chrysanthemi (strain 3937)), this protein is Probable deoxyribonuclease RhsA (rhsA).